The chain runs to 357 residues: N-acetyl-gamma-glutamyl-phosphate reductase (357 aa).

The active site involves C151.

The protein belongs to the NAGSA dehydrogenase family. Type 1 subfamily.

It is found in the cytoplasm. The catalysed reaction is N-acetyl-L-glutamate 5-semialdehyde + phosphate + NADP(+) = N-acetyl-L-glutamyl 5-phosphate + NADPH + H(+). The protein operates within amino-acid biosynthesis; L-arginine biosynthesis; N(2)-acetyl-L-ornithine from L-glutamate: step 3/4. Functionally, catalyzes the NADPH-dependent reduction of N-acetyl-5-glutamyl phosphate to yield N-acetyl-L-glutamate 5-semialdehyde. In Corynebacterium kroppenstedtii (strain DSM 44385 / JCM 11950 / CIP 105744 / CCUG 35717), this protein is N-acetyl-gamma-glutamyl-phosphate reductase.